A 354-amino-acid chain; its full sequence is Photosystem II protein D1 2 (354 aa).

Helical transmembrane passes span 29-46 (YIGW…TATT), 118-133 (HFLI…EWEL), and 142-156 (WIAV…AATA). Position 118 (His-118) interacts with chlorophyll a. Position 126 (Tyr-126) interacts with pheophytin a. 2 residues coordinate [CaMn4O5] cluster: Asp-170 and Glu-189. Residues 197–218 (FHQLGVAGVFGGALFSAMHGSL) form a helical membrane-spanning segment. Residue His-198 coordinates chlorophyll a. Residues His-215 and 264–265 (SF) each bind a quinone. Residue His-215 coordinates Fe cation. Residue His-272 participates in Fe cation binding. A helical transmembrane segment spans residues 274–288 (FLAAWPVIGIWFTAL). Residues His-332, Glu-333, Asp-342, and Ala-344 each coordinate [CaMn4O5] cluster. Residues 345–354 (AVEVAPAVRG) constitute a propeptide that is removed on maturation.

This sequence belongs to the reaction center PufL/M/PsbA/D family. PSII is composed of 1 copy each of membrane proteins PsbA, PsbB, PsbC, PsbD, PsbE, PsbF, PsbH, PsbI, PsbJ, PsbK, PsbL, PsbM, PsbT, PsbX, PsbY, PsbZ, Psb30/Ycf12, peripheral proteins PsbO, CyanoQ (PsbQ), PsbU, PsbV and a large number of cofactors. It forms dimeric complexes. The D1/D2 heterodimer binds P680, chlorophylls that are the primary electron donor of PSII, and subsequent electron acceptors. It shares a non-heme iron and each subunit binds pheophytin, quinone, additional chlorophylls, carotenoids and lipids. D1 provides most of the ligands for the Mn4-Ca-O5 cluster of the oxygen-evolving complex (OEC). There is also a Cl(-1) ion associated with D1 and D2, which is required for oxygen evolution. The PSII complex binds additional chlorophylls, carotenoids and specific lipids. serves as cofactor. In terms of processing, tyr-161 forms a radical intermediate that is referred to as redox-active TyrZ, YZ or Y-Z. Post-translationally, C-terminally processed by CtpA; processing is essential to allow assembly of the oxygen-evolving complex and thus photosynthetic growth.

The protein resides in the cellular thylakoid membrane. The enzyme catalyses 2 a plastoquinone + 4 hnu + 2 H2O = 2 a plastoquinol + O2. Photosystem II (PSII) is a light-driven water:plastoquinone oxidoreductase that uses light energy to abstract electrons from H(2)O, generating O(2) and a proton gradient subsequently used for ATP formation. It consists of a core antenna complex that captures photons, and an electron transfer chain that converts photonic excitation into a charge separation. The D1/D2 (PsbA/PsbD) reaction center heterodimer binds P680, the primary electron donor of PSII as well as several subsequent electron acceptors. The sequence is that of Photosystem II protein D1 2 from Synechococcus sp. (strain JA-2-3B'a(2-13)) (Cyanobacteria bacterium Yellowstone B-Prime).